A 277-amino-acid polypeptide reads, in one-letter code: Adaptin ear-binding coat-associated protein 1 (277 aa).

Positions 164 to 277 are disordered; the sequence is GNITAKKGGT…APQPSNWVQF (114 aa). The segment covering 187 to 201 has biased composition (pro residues); that stretch reads LPPPPGGKVTIPPPS. Phosphothreonine is present on T211. Residues 222-234 show a composition bias toward low complexity; sequence SNDSDILLDLDSP. The span at 235 to 245 shows a compositional bias: pro residues; sequence APVPTSAPAPA. 2 short sequence motifs (WXXF motif) span residues 254 to 257 and 274 to 277; these read WGDF and WVQF. A compositionally biased stretch (polar residues) spans 258–277; it reads STASSSVPNQAPQPSNWVQF.

Belongs to the NECAP family. As to quaternary structure, interacts with AP1G1 and AP2A1 components of the adapter protein complexes AP-1 and AP-2. Interacts with the GAE domain proteins GGA1, GGA2 and GGA3. Interacts with AP2A2. In terms of tissue distribution, expressed predominantly in brain (at protein level).

It is found in the cytoplasmic vesicle. Its subcellular location is the clathrin-coated vesicle membrane. It localises to the cell membrane. Functionally, involved in endocytosis. The protein is Adaptin ear-binding coat-associated protein 1 (Necap1) of Rattus norvegicus (Rat).